The following is a 49-amino-acid chain: Large ribosomal subunit protein eL40 (49 aa).

Belongs to the eukaryotic ribosomal protein eL40 family.

The chain is Large ribosomal subunit protein eL40 from Haloquadratum walsbyi (strain DSM 16790 / HBSQ001).